A 227-amino-acid chain; its full sequence is Cytochrome c oxidase subunit 2 (227 aa).

The Mitochondrial intermembrane portion of the chain corresponds to 1–14 (MAYPMQLGFQDATS). A helical membrane pass occupies residues 15–45 (PIMEELLHFHDHTLMIVFLISSLVLYIISLM). Over 46–59 (LTTKLTHTSTMDAQ) the chain is Mitochondrial matrix. The chain crosses the membrane as a helical span at residues 60–87 (EVETVWTILPAIILILIALPSLRILYMM). The Mitochondrial intermembrane segment spans residues 88 to 227 (DEINNPSLTV…HFEEWSASMS (140 aa)). Residues His-161, Cys-196, Glu-198, Cys-200, His-204, and Met-207 each coordinate Cu cation. Glu-198 is a Mg(2+) binding site.

This sequence belongs to the cytochrome c oxidase subunit 2 family. As to quaternary structure, component of the cytochrome c oxidase (complex IV, CIV), a multisubunit enzyme composed of 14 subunits. The complex is composed of a catalytic core of 3 subunits MT-CO1, MT-CO2 and MT-CO3, encoded in the mitochondrial DNA, and 11 supernumerary subunits COX4I, COX5A, COX5B, COX6A, COX6B, COX6C, COX7A, COX7B, COX7C, COX8 and NDUFA4, which are encoded in the nuclear genome. The complex exists as a monomer or a dimer and forms supercomplexes (SCs) in the inner mitochondrial membrane with NADH-ubiquinone oxidoreductase (complex I, CI) and ubiquinol-cytochrome c oxidoreductase (cytochrome b-c1 complex, complex III, CIII), resulting in different assemblies (supercomplex SCI(1)III(2)IV(1) and megacomplex MCI(2)III(2)IV(2)). Found in a complex with TMEM177, COA6, COX18, COX20, SCO1 and SCO2. Interacts with TMEM177 in a COX20-dependent manner. Interacts with COX20. Interacts with COX16. Requires Cu cation as cofactor.

It localises to the mitochondrion inner membrane. It carries out the reaction 4 Fe(II)-[cytochrome c] + O2 + 8 H(+)(in) = 4 Fe(III)-[cytochrome c] + 2 H2O + 4 H(+)(out). Its function is as follows. Component of the cytochrome c oxidase, the last enzyme in the mitochondrial electron transport chain which drives oxidative phosphorylation. The respiratory chain contains 3 multisubunit complexes succinate dehydrogenase (complex II, CII), ubiquinol-cytochrome c oxidoreductase (cytochrome b-c1 complex, complex III, CIII) and cytochrome c oxidase (complex IV, CIV), that cooperate to transfer electrons derived from NADH and succinate to molecular oxygen, creating an electrochemical gradient over the inner membrane that drives transmembrane transport and the ATP synthase. Cytochrome c oxidase is the component of the respiratory chain that catalyzes the reduction of oxygen to water. Electrons originating from reduced cytochrome c in the intermembrane space (IMS) are transferred via the dinuclear copper A center (CU(A)) of subunit 2 and heme A of subunit 1 to the active site in subunit 1, a binuclear center (BNC) formed by heme A3 and copper B (CU(B)). The BNC reduces molecular oxygen to 2 water molecules using 4 electrons from cytochrome c in the IMS and 4 protons from the mitochondrial matrix. The chain is Cytochrome c oxidase subunit 2 (MT-CO2) from Antilocapra americana (Pronghorn).